A 152-amino-acid polypeptide reads, in one-letter code: Xanthine-guanine phosphoribosyltransferase (152 aa).

Residues 37-38 (RG) and 88-96 (DDLVDTGNT) each bind 5-phospho-alpha-D-ribose 1-diphosphate. Residue Asp-89 coordinates Mg(2+). 2 residues coordinate guanine: Asp-92 and Ile-135. Xanthine contacts are provided by Asp-92 and Ile-135. GMP is bound by residues 92 to 96 (DTGNT) and 134 to 135 (WI).

Belongs to the purine/pyrimidine phosphoribosyltransferase family. XGPT subfamily. Homotetramer. The cofactor is Mg(2+).

It localises to the cell inner membrane. It carries out the reaction GMP + diphosphate = guanine + 5-phospho-alpha-D-ribose 1-diphosphate. The enzyme catalyses XMP + diphosphate = xanthine + 5-phospho-alpha-D-ribose 1-diphosphate. The catalysed reaction is IMP + diphosphate = hypoxanthine + 5-phospho-alpha-D-ribose 1-diphosphate. It participates in purine metabolism; GMP biosynthesis via salvage pathway; GMP from guanine: step 1/1. The protein operates within purine metabolism; XMP biosynthesis via salvage pathway; XMP from xanthine: step 1/1. In terms of biological role, purine salvage pathway enzyme that catalyzes the transfer of the ribosyl-5-phosphate group from 5-phospho-alpha-D-ribose 1-diphosphate (PRPP) to the N9 position of the 6-oxopurines guanine and xanthine to form the corresponding ribonucleotides GMP (guanosine 5'-monophosphate) and XMP (xanthosine 5'-monophosphate), with the release of PPi. To a lesser extent, also acts on hypoxanthine. In Actinobacillus succinogenes (strain ATCC 55618 / DSM 22257 / CCUG 43843 / 130Z), this protein is Xanthine-guanine phosphoribosyltransferase.